Reading from the N-terminus, the 150-residue chain is Protein E6 (150 aa).

Zinc fingers lie at residues 31–67 (CVFC…CACC) and 104–140 (CYLC…CFHC).

It belongs to the papillomaviridae E6 protein family. As to quaternary structure, forms homodimers. Interacts with ubiquitin-protein ligase UBE3A/E6-AP; this interaction stimulates UBE3A ubiquitin activity. Interacts with host TP53 and EP300; this interaction inhibits TP53 activity.

The protein localises to the host cytoplasm. It is found in the host nucleus. Functionally, plays a major role in the induction and maintenance of cellular transformation. E6 associates with host UBE3A/E6-AP ubiquitin-protein ligase and modulates its activity. Sequesters tumor suppressor TP53 in the host cytoplasm and modulates its activity by interacting with host EP300 that results in the reduction of TP53 acetylation and activation. In turn, apoptosis induced by DNA damage is inhibited. E6 also protects host keratinocytes from apoptosis by mediating the degradation of host BAK1. May also inhibit host immune response. The polypeptide is Protein E6 (Pygmy chimpanzee papillomavirus type 1 (PCPV-1)).